Consider the following 276-residue polypeptide: Plant cysteine oxidase 2 (276 aa).

A disordered region spans residues 1–40 (MGTDTVMSGRVRKDLSKTNPNGNIPENRSNSRKKIQRRSK). Residues 17 to 28 (KTNPNGNIPENR) show a composition bias toward polar residues. Positions 30-40 (NSRKKIQRRSK) are enriched in basic residues. 3 residues coordinate Fe cation: histidine 134, histidine 136, and histidine 197.

Belongs to the cysteine dioxygenase family. The cofactor is Fe(2+).

It localises to the nucleus. The protein localises to the cytoplasm. It carries out the reaction L-cysteine + O2 = 3-sulfino-L-alanine + H(+). In terms of biological role, catalyzes the oxidation of N-terminal cysteine residues (N-Cys), thus preparing the protein for N-end rule pathway-mediated proteasomal degradation, upstream of the N-end rule enzymes ATE1, ATE2 and PRT6. Controls the preparation of the group VII ethylene response factor (ERF-VII) proteins for degradation via the 26S proteasome N-end rule pathway. Acts as an oxygen sensor that controls the stability of ERF-VII proteins, which are stabilized in flooding-induced hypoxia, and regulate transcriptional adaptation to these adverse conditions. Not active on Cys located inside or at the C-terminus of a peptide. Acts redundantly with PCO1 to repress the anaerobic response. This Arabidopsis thaliana (Mouse-ear cress) protein is Plant cysteine oxidase 2.